The chain runs to 345 residues: Probable 1-aminocyclopropane-1-carboxylate deaminase (345 aa).

N6-(pyridoxal phosphate)lysine is present on Lys-58. Ser-85 serves as the catalytic Nucleophile.

It belongs to the ACC deaminase/D-cysteine desulfhydrase family. Pyridoxal 5'-phosphate serves as cofactor.

It carries out the reaction 1-aminocyclopropane-1-carboxylate + H2O = 2-oxobutanoate + NH4(+). Catalyzes a cyclopropane ring-opening reaction, the irreversible conversion of 1-aminocyclopropane-1-carboxylate (ACC) to ammonia and alpha-ketobutyrate. This is Probable 1-aminocyclopropane-1-carboxylate deaminase from Cryptococcus neoformans var. neoformans serotype D (strain JEC21 / ATCC MYA-565) (Filobasidiella neoformans).